A 901-amino-acid polypeptide reads, in one-letter code: MVSLGGLARKLFGSANDRRVRGYQGRVDAINALEAEMKALSDEALAAKTVEFRQQLAEGKTLDDLLVPAFAVVREAARRVLGLRPFDVQLIGGMILHERSISEMKTGEGKTLVATLPVYLNALAGKGVHVVTVNDYLAQRDAGMMGRIYGFLGLTTGVIVHGLTDEQRRDAYACDVTYATNNELGFDYLRDNMKYERAQMVQRGHFFAIVDEVDSILVDEARTPLIISGPLDDRSDLYNTINDFIPLLSPEDYEIDEKQRSANFSEEGTEKLENLLRQAGLLKGESLYDIENVAIVHHVNNALKAHKLFTRDKDYIVRNDEIVIIDEFTGRMMPGRRYSEGQHQALEAKEKVQIQPENQTLASVTFQNYFRMYEKLAGMTGTAATEAEEFGNIYGLEVVEVPTNLPIKRADEDDEVYRTAGEKYKAIIDEIKAAHERGQPMLVGTTSIEKSELLADMLKKSGFSKFQVLNARYHEQEAFIVAQAGVPGAVTIATNMAGRGTDIQLGGNPDMRIQQELAEVEPGPEREAREKAIREEVQKLKEKALDAGGLYVLATERHESRRIDNQLRGRSGRQGDPGRSKFFLSIQDDLMRIFGSDRMDGMLQKLGLKEGEAIVHPWINKALERAQKKVEARNFDIRKNLLKYDDVLNDQRKVIFEQRLELMDAESVSDTVADMRNEVIEDIVSKRIPERAYAEQWDVTGLKADVQQYFNLDLPVPDWAAEEGIAEDDILERVTAAVDAAAAERAERFGPEIMQYVERSVVLQTLDHLWREHIVNLDHLRSVIGFRGYAQRDPLQEYKSEAFELFQALLVNLRQAVSAQLMRVELVRETPQEPQPLPPMQGHHIDPLTGEDDFAEAPLLAVAPADRNPAEPSSWGKVARNEPCPCGSGKKYKHCHGIYEA.

ATP-binding positions include glutamine 89, 107–111, and aspartate 502; that span reads GEGKT. Zn(2+) contacts are provided by cysteine 884, cysteine 886, cysteine 895, and histidine 896.

This sequence belongs to the SecA family. In terms of assembly, monomer and homodimer. Part of the essential Sec protein translocation apparatus which comprises SecA, SecYEG and auxiliary proteins SecDF-YajC and YidC. Zn(2+) is required as a cofactor.

The protein resides in the cell inner membrane. The protein localises to the cytoplasm. The catalysed reaction is ATP + H2O + cellular proteinSide 1 = ADP + phosphate + cellular proteinSide 2.. Part of the Sec protein translocase complex. Interacts with the SecYEG preprotein conducting channel. Has a central role in coupling the hydrolysis of ATP to the transfer of proteins into and across the cell membrane, serving both as a receptor for the preprotein-SecB complex and as an ATP-driven molecular motor driving the stepwise translocation of polypeptide chains across the membrane. The chain is Protein translocase subunit SecA from Sinorhizobium fredii (strain NBRC 101917 / NGR234).